A 384-amino-acid polypeptide reads, in one-letter code: S-adenosylmethionine synthase (384 aa).

Histidine 15 contributes to the ATP binding site. Aspartate 17 contacts Mg(2+). Glutamate 43 lines the K(+) pocket. L-methionine is bound by residues glutamate 56 and glutamine 99. Positions 99–109 (QSPDINQGVDR) are flexible loop. ATP-binding positions include 164–166 (DAK), 230–231 (RF), aspartate 239, 245–246 (RK), alanine 262, and lysine 266. Aspartate 239 contacts L-methionine. L-methionine is bound at residue lysine 270.

It belongs to the AdoMet synthase family. In terms of assembly, homotetramer; dimer of dimers. Requires Mg(2+) as cofactor. The cofactor is K(+).

The protein resides in the cytoplasm. The enzyme catalyses L-methionine + ATP + H2O = S-adenosyl-L-methionine + phosphate + diphosphate. It functions in the pathway amino-acid biosynthesis; S-adenosyl-L-methionine biosynthesis; S-adenosyl-L-methionine from L-methionine: step 1/1. Its function is as follows. Catalyzes the formation of S-adenosylmethionine (AdoMet) from methionine and ATP. The overall synthetic reaction is composed of two sequential steps, AdoMet formation and the subsequent tripolyphosphate hydrolysis which occurs prior to release of AdoMet from the enzyme. This is S-adenosylmethionine synthase from Salmonella agona (strain SL483).